A 299-amino-acid chain; its full sequence is NAD kinase (299 aa).

The active-site Proton acceptor is the Asp71. NAD(+)-binding positions include 71-72, 145-146, Arg173, Asp175, 186-191, Ala210, and Gln248; these read DG, ND, and TAYSLS.

It belongs to the NAD kinase family. A divalent metal cation is required as a cofactor.

The protein resides in the cytoplasm. The catalysed reaction is NAD(+) + ATP = ADP + NADP(+) + H(+). Its function is as follows. Involved in the regulation of the intracellular balance of NAD and NADP, and is a key enzyme in the biosynthesis of NADP. Catalyzes specifically the phosphorylation on 2'-hydroxyl of the adenosine moiety of NAD to yield NADP. The chain is NAD kinase from Bordetella bronchiseptica (strain ATCC BAA-588 / NCTC 13252 / RB50) (Alcaligenes bronchisepticus).